A 268-amino-acid chain; its full sequence is Putative hydro-lyase ABAYE2440 (268 aa).

It belongs to the D-glutamate cyclase family.

The chain is Putative hydro-lyase ABAYE2440 from Acinetobacter baumannii (strain AYE).